A 206-amino-acid polypeptide reads, in one-letter code: Small ribosomal subunit protein uS4 (206 aa).

Positions 18 to 45 are disordered; it reads NIWGRPKSPVNRREYGPGQHGQRRKGKM. Positions 94-157 constitute an S4 RNA-binding domain; sequence RRLDAVVYRA…KQLASVLEAV (64 aa).

The protein belongs to the universal ribosomal protein uS4 family. Part of the 30S ribosomal subunit. Contacts protein S5. The interaction surface between S4 and S5 is involved in control of translational fidelity.

Its function is as follows. One of the primary rRNA binding proteins, it binds directly to 16S rRNA where it nucleates assembly of the body of the 30S subunit. With S5 and S12 plays an important role in translational accuracy. The sequence is that of Small ribosomal subunit protein uS4 from Ruegeria pomeroyi (strain ATCC 700808 / DSM 15171 / DSS-3) (Silicibacter pomeroyi).